A 202-amino-acid chain; its full sequence is Imidazole glycerol phosphate synthase subunit HisH (202 aa).

One can recognise a Glutamine amidotransferase type-1 domain in the interval 3 to 202 (RIVIIDYGLG…KILKNFVEMC (200 aa)). Catalysis depends on Cys79, which acts as the Nucleophile. Active-site residues include His183 and Glu185.

Heterodimer of HisH and HisF.

The protein localises to the cytoplasm. It carries out the reaction 5-[(5-phospho-1-deoxy-D-ribulos-1-ylimino)methylamino]-1-(5-phospho-beta-D-ribosyl)imidazole-4-carboxamide + L-glutamine = D-erythro-1-(imidazol-4-yl)glycerol 3-phosphate + 5-amino-1-(5-phospho-beta-D-ribosyl)imidazole-4-carboxamide + L-glutamate + H(+). It catalyses the reaction L-glutamine + H2O = L-glutamate + NH4(+). It participates in amino-acid biosynthesis; L-histidine biosynthesis; L-histidine from 5-phospho-alpha-D-ribose 1-diphosphate: step 5/9. Functionally, IGPS catalyzes the conversion of PRFAR and glutamine to IGP, AICAR and glutamate. The HisH subunit catalyzes the hydrolysis of glutamine to glutamate and ammonia as part of the synthesis of IGP and AICAR. The resulting ammonia molecule is channeled to the active site of HisF. The chain is Imidazole glycerol phosphate synthase subunit HisH from Methanosarcina acetivorans (strain ATCC 35395 / DSM 2834 / JCM 12185 / C2A).